Reading from the N-terminus, the 331-residue chain is uncharacterized protein (331 aa).

Disordered regions lie at residues 131-163 (ISHA…KKRS) and 190-209 (DEQK…VQSS). Over residues 140 to 162 (RPKPTKPRASRKRAAIAQSKKKR) the composition is skewed to basic residues. Polar residues predominate over residues 195–209 (RQSTSQPDKEIVQSS).

This is an uncharacterized protein from Caenorhabditis elegans.